The sequence spans 895 residues: Endochitinase 2 (895 aa).

A signal peptide spans 1–22 (MGLTNILAAFIAVSSLFIQSLA). A GH18 domain is found at 29 to 340 (SNLAVYWGQG…DIMKEVLLRC (312 aa)). A glycan (N-linked (GlcNAc...) asparagine) is linked at Asn-90. The active-site Proton donor is Glu-175. Residues 343–712 (DPPTSTVTST…APSSSTTEDR (370 aa)) form a disordered region. A compositionally biased stretch (low complexity) spans 346–425 (TSTVTSTISA…ISTRSASTET (80 aa)). The segment covering 426 to 478 (VTTRSQEPPSTTISTRPASTETVTTRSQEPPSSTISTRSASTETVTTRSQEPP) has biased composition (polar residues). Positions 479–505 (SSTISTRSASTETSTSSQDSPSTTIST) are enriched in low complexity. Positions 506-543 (KSAPTGTVTTRSQDLPSTTISTRSPETETETVTTKSQD) are enriched in polar residues. Positions 544 to 555 (SPSITLSTRSSS) are enriched in low complexity. The span at 556-577 (AETVSTRSQHSSSTTISTKSAP) shows a compositional bias: polar residues. The span at 578 to 589 (TETGTTSEHSTS) shows a compositional bias: low complexity. The segment covering 590-657 (MPVSTRSAST…ISTELPSQTH (68 aa)) has biased composition (polar residues). Low complexity-rich tracts occupy residues 658-692 (STTD…APTT) and 699-712 (TLTL…TEDR). Residue Gly-866 is the site of GPI-anchor amidated glycine attachment. Positions 867 to 895 (GAMTVRSMDVVAKALITAGAAVLGLFLGL) are cleaved as a propeptide — removed in mature form.

The protein belongs to the glycosyl hydrolase 18 family. Chitinase class III subfamily.

Its subcellular location is the cell membrane. The enzyme catalyses Random endo-hydrolysis of N-acetyl-beta-D-glucosaminide (1-&gt;4)-beta-linkages in chitin and chitodextrins.. Its function is as follows. May be associated with endosporulation. The chain is Endochitinase 2 (CTS2) from Coccidioides immitis (strain RS) (Valley fever fungus).